A 462-amino-acid chain; its full sequence is BBSome complex member bbs-4 (462 aa).

Residues 1–46 are disordered; the sequence is MEASNQDEIIGTDVIPNEQDNPEEVVPEPTSLDVPPPPPERAPSAP. TPR repeat units follow at residues 89-122, 124-156, 199-232, 234-266, 268-300, 335-368, and 369-402; these read EAAFHVRGLIARNEGELEEAMECFHKAYELSGKN, RYFYETGRCNFLLGRHQIAVEQLTKASEVMKDN, ATLICFLGRLCEELGDTSGAIAAYKSSLKLQPDN, EVMNLLGLIYLRTGQVQEGFVQLGNCLAYDPAN, QAILTIGSIMQNHSDHDVALNKYRVAADVSDYN, YKISYNLGVLHDIMNLHCSALHYIKLCTELYPQN, and AKAVGAMAVILSHMNDDKNARLAYKKSIELKKNP.

The protein belongs to the BBS4 family. As to quaternary structure, part of BBSome complex, that contains at least bbs-1, bbs-2, bbs-4, bbs-5, osm-12, bbs-8/ttc-8 and bbs-9. Interacts (via C-terminus) with bbs-5; the interaction is direct.

It localises to the cytoplasm. It is found in the cytoskeleton. Its subcellular location is the microtubule organizing center. The protein resides in the centrosome. The protein localises to the cell projection. It localises to the cilium membrane. Component of the BBSome complex. The BBSome complex is thought to function as a coat complex required for sorting of specific membrane proteins to the primary cilia. The BBSome complex is required for ciliogenesis but is dispensable for centriolar satellite function. Required for proper BBSome complex assembly and its ciliary localization. May be required for microtubule anchoring at the centrosome but not for microtubule nucleation. May be required for the dynein-mediated transport of pericentriolar proteins to the centrosome. Required, redundantly with bbs-5, for cilia biogenesis and both the assembly and movement of intraflagellar transport proteins along the ciliary axoneme. Plays a role in the removal of degraded mechanosensory receptors within the cilia. This chain is BBSome complex member bbs-4, found in Caenorhabditis elegans.